We begin with the raw amino-acid sequence, 316 residues long: Phospholipase A1 2 (316 aa).

An N-terminal signal peptide occupies residues 1-4 (ADDL). The propeptide occupies 5 to 14 (TTLRNGTLDR). An intrachain disulfide couples Cys20 to Cys103. The Nucleophile role is filled by Ser153. Asp181 (charge relay system) is an active-site residue. 2 disulfides stabilise this stretch: Cys192–Cys197 and Cys235–Cys240. The Charge relay system role is filled by His242. 3 disulfides stabilise this stretch: Cys257–Cys284, Cys258–Cys309, and Cys277–Cys282.

This sequence belongs to the AB hydrolase superfamily. Lipase family. Expressed by the venom gland.

It localises to the secreted. It carries out the reaction a 1,2-diacyl-sn-glycero-3-phosphocholine + H2O = a 2-acyl-sn-glycero-3-phosphocholine + a fatty acid + H(+). Its function is as follows. Catalyzes the hydrolysis of phosphatidylcholine with phospholipase A1 activity. May act as an allergen and induce hemolytic activity. This is Phospholipase A1 2 from Polistes dominula (European paper wasp).